Consider the following 89-residue polypeptide: Exodeoxyribonuclease 7 small subunit (89 aa).

A disordered region spans residues 1–22 (MRKKSSSNKEETALHPPPENFE).

Belongs to the XseB family. As to quaternary structure, heterooligomer composed of large and small subunits.

The protein localises to the cytoplasm. It catalyses the reaction Exonucleolytic cleavage in either 5'- to 3'- or 3'- to 5'-direction to yield nucleoside 5'-phosphates.. In terms of biological role, bidirectionally degrades single-stranded DNA into large acid-insoluble oligonucleotides, which are then degraded further into small acid-soluble oligonucleotides. The protein is Exodeoxyribonuclease 7 small subunit of Nitrosomonas europaea (strain ATCC 19718 / CIP 103999 / KCTC 2705 / NBRC 14298).